A 325-amino-acid polypeptide reads, in one-letter code: Polyprenyl transferase mpaA (325 aa).

The next 3 helical transmembrane spans lie at 27-47 (MPYY…ALKL), 56-76 (VEYI…LCGA), and 108-128 (VEAL…LDLI). The N-linked (GlcNAc...) asparagine glycan is linked to Asn-131. 6 helical membrane passes run 134 to 151 (IWGL…YPYL), 159 to 179 (VFIY…ITGW), 192 to 212 (IFTH…YFNT), 240 to 260 (LFLA…VLKI), 262 to 282 (SPWL…MQIV), and 295 to 315 (IHWD…VEVG).

The protein belongs to the UbiA prenyltransferase family. Mg(2+) serves as cofactor.

Its subcellular location is the golgi apparatus membrane. The enzyme catalyses 5,7-dihydroxy-4-methylphthalide + (2E,6E)-farnesyl diphosphate = 4-farnesyl-3,5-dihydroxy-6-methylphthalide + diphosphate. It functions in the pathway secondary metabolite biosynthesis; terpenoid biosynthesis. Polyprenyl transferase; part of the gene cluster that mediates the biosynthesis of mycophenolic acid (MPA), the first isolated antibiotic natural product in the world obtained from a culture of Penicillium brevicompactum in 1893. MpaA is a Golgi apparatus-associated enzyme that catalyzes the prenylation of 5,7-dihydroxy-4,6-dimethylphthalide (DHMP) to yield farnesyl-DHMP (FDHMP). The first step of the pathway is the synthesis of 5-methylorsellinic acid (5MOA) by the cytosolic polyketide synthase mpaC. 5MOA is then converted to the phthalide compound 5,7-dihydroxy-4,6-dimethylphthalide (DHMP) by the endoplasmic reticulum-bound cytochrome P450 monooxygenase mpaDE. MpaDE first catalyzes hydroxylation of 5-MOA to 4,6-dihydroxy-2-(hydroxymethyl)-3-methylbenzoic acid (DHMB). MpaDE then acts as a lactone synthase that catalyzes the ring closure to convert DHMB into DHMP. The next step is the prenylation of DHMP by the Golgi apparatus-associated prenyltransferase mpaA to yield farnesyl-DHMP (FDHMP). The ER-bound oxygenase mpaB then mediates the oxidative cleavage the C19-C20 double bond in FDHMP to yield FDHMP-3C via a mycophenolic aldehyde intermediate. The O-methyltransferase mpaG catalyzes the methylation of FDHMP-3C to yield MFDHMP-3C. After the cytosolic methylation of FDHMP-3C, MFDHMP-3C enters into peroxisomes probably via free diffusion due to its low molecular weight. Upon a peroxisomal CoA ligation reaction, catalyzed by a beta-oxidation component enzyme acyl-CoA ligase ACL891, MFDHMP-3C-CoA would then be restricted to peroxisomes for the following beta-oxidation pathway steps. The peroxisomal beta-oxidation machinery than converts MFDHMP-3C-CoA into MPA_CoA, via a beta-oxidation chain-shortening process. Finally mpaH acts as a peroxisomal acyl-CoA hydrolase with high substrate specificity toward MPA-CoA to release the final product MPA. The sequence is that of Polyprenyl transferase mpaA from Penicillium roqueforti (strain FM164).